We begin with the raw amino-acid sequence, 789 residues long: 1-phosphatidylinositol 4,5-bisphosphate phosphodiesterase delta-3 (789 aa).

The region spanning 63-172 (RAMLRGSRLR…WVRGLTKLRA (110 aa)) is the PH domain. Residues 73–101 (KIRSRTWHKERLYRLQEDGLSVWFQRRIP) form a substrate binding region. Ser-105 is modified (phosphoserine). EF-hand domains follow at residues 182-217 (RLDHWIHSYLHRADSNQDSKMSFKEIKSLLRMVNVD), 218-253 (MNDMYAYLLFKECDHSNNDRLEGAEIEEFLRRLLKR), and 250-285 (LLKRPELEEIFHQYSGEDRVLSAPELLEFLEDQGEE). Positions 195, 197, 199, 201, 206, 231, 233, 235, 237, and 242 each coordinate Ca(2+). The 146-residue stretch at 337-482 (QDMNQPLAHY…LKGRVLVKGK (146 aa)) folds into the PI-PLC X-box domain. The active site involves His-352. Residues Asn-353, Glu-382, and Asp-384 each contribute to the Ca(2+) site. His-397 is a catalytic residue. Glu-431 is a binding site for Ca(2+). Residues 461–519 (SPNPEELPSPEQLKGRVLVKGKKLPAARSEDGRALSDREEEEEDDEEEEEEVEAAAQRR) form a disordered region. Residues Lys-480 and Lys-482 each coordinate substrate. Over residues 488–497 (RSEDGRALSD) the composition is skewed to basic and acidic residues. A Phosphoserine modification is found at Ser-496. Over residues 498–513 (REEEEEDDEEEEEEVE) the composition is skewed to acidic residues. In terms of domain architecture, PI-PLC Y-box spans 528-644 (LSALAVYCHA…GYVLKPACLR (117 aa)). Ser-557 contacts substrate. Phosphoserine is present on Ser-573. Arg-584 contacts substrate. The 126-residue stretch at 644–769 (RQPDSTFDPE…QGYRHIHLLS (126 aa)) folds into the C2 domain. Ca(2+)-binding residues include Ile-683, Asp-685, Asn-709, Asp-738, Tyr-739, and Asp-740.

The cofactor is Ca(2+). Present in corneal epithelial cells (at protein level).

Its subcellular location is the membrane. It is found in the cytoplasm. The protein localises to the cleavage furrow. The enzyme catalyses a 1,2-diacyl-sn-glycero-3-phospho-(1D-myo-inositol-4,5-bisphosphate) + H2O = 1D-myo-inositol 1,4,5-trisphosphate + a 1,2-diacyl-sn-glycerol + H(+). Its activity is regulated as follows. Strongly activated by phosphatidic acid. Inhibited by phosphatidylethanolamine (PtdEtn), phosphatidylcholine (PtdCho), sphingomyelin and phosphatidylserine (PtdSer). Its function is as follows. Hydrolyzes the phosphatidylinositol 4,5-bisphosphate (PIP2) to generate 2 second messenger molecules diacylglycerol (DAG) and inositol 1,4,5-trisphosphate (IP3). DAG mediates the activation of protein kinase C (PKC), while IP3 releases Ca(2+) from intracellular stores. Essential for trophoblast and placental development. May participate in cytokinesis by hydrolyzing PIP2 at the cleavage furrow. Regulates neurite outgrowth through the inhibition of RhoA/Rho kinase signaling. The polypeptide is 1-phosphatidylinositol 4,5-bisphosphate phosphodiesterase delta-3 (Homo sapiens (Human)).